Reading from the N-terminus, the 155-residue chain is FAD synthase (155 aa).

Residues 9–10 (TF), 14–17 (HPGH), and Asp-92 each bind ATP.

The protein belongs to the archaeal FAD synthase family. Homodimer. The cofactor is a divalent metal cation.

It carries out the reaction FMN + ATP + H(+) = FAD + diphosphate. The protein operates within cofactor biosynthesis; FAD biosynthesis; FAD from FMN: step 1/1. Catalyzes the transfer of the AMP portion of ATP to flavin mononucleotide (FMN) to produce flavin adenine dinucleotide (FAD) coenzyme. The chain is FAD synthase from Archaeoglobus profundus (strain DSM 5631 / JCM 9629 / NBRC 100127 / Av18).